A 129-amino-acid polypeptide reads, in one-letter code: UPF0146 protein VNG_2609C (129 aa).

The protein belongs to the UPF0146 family.

This chain is UPF0146 protein VNG_2609C, found in Halobacterium salinarum (strain ATCC 700922 / JCM 11081 / NRC-1) (Halobacterium halobium).